The sequence spans 711 residues: Polyribonucleotide nucleotidyltransferase (711 aa).

D491 and D497 together coordinate Mg(2+). The KH domain occupies 559–618 (PRLITIKINPEKIRDVIGKGGAVIRALTEETGTQIDISDEGVVTIASVDAAAGQEAKRRI). One can recognise an S1 motif domain in the interval 628–696 (GKIYEGTVLK…DRGRLKLSMK (69 aa)).

The protein belongs to the polyribonucleotide nucleotidyltransferase family. Mg(2+) is required as a cofactor.

The protein resides in the cytoplasm. It carries out the reaction RNA(n+1) + phosphate = RNA(n) + a ribonucleoside 5'-diphosphate. Involved in mRNA degradation. Catalyzes the phosphorolysis of single-stranded polyribonucleotides processively in the 3'- to 5'-direction. In Janthinobacterium sp. (strain Marseille) (Minibacterium massiliensis), this protein is Polyribonucleotide nucleotidyltransferase.